The chain runs to 122 residues: MKRRLIYSNGLHGLPTEIIACTEVQEKRYERTGEVAFALASLSWSDGIVEELGAIVLDSWKKCGVNAAKLPSGMLLSQNERVTSRVTNSRTESESNGNGNATGNTSSNANSNGNANGIYIRK.

The span at 79–90 (NERVTSRVTNSR) shows a compositional bias: polar residues. The segment at 79–122 (NERVTSRVTNSRTESESNGNGNATGNTSSNANSNGNANGIYIRK) is disordered. The segment covering 94-122 (ESNGNGNATGNTSSNANSNGNANGIYIRK) has biased composition (low complexity).

This is an uncharacterized protein from Leptolyngbya boryana (Plectonema boryanum).